Here is a 673-residue protein sequence, read N- to C-terminus: MSKPFKLNSAFKPSGDQPEAIRRLEEGLEDGLAHQTLLGVTGSGKTFTIANVIADLQRPTMVLAPNKTLAAQLYGEMKEFFPENAVEYFVSYYDYYQPEAYVPSSDTFIEKDASVNEHIEQMRLSATKAMLERRDVVVVASVSAIYGLGDPDLYLKMMLHLTVGMIIDQRAILRRLAELQYARNDQAFQRGTFRVRGEVIDIFPAESDDIALRVELFDEEVERLSLFDPLTGQIVSTIPRFTIYPKTHYVTPRERIVQAMEEIKEELAARRKVLLENNKLLEEQRLTQRTQFDLEMMNELGYCSGIENYSRFLSGRGPGEPPPTLFDYLPADGLLVVDESHVTIPQIGGMYRGDRARKETLVEYGFRLPSALDNRPLKFEEFEALAPQTIYVSATPGNYELEKSGGDVVDQVVRPTGLLDPIIEVRPVATQVDDLLSEIRQRAAINERVLVTTLTKRMAEDLTEYLEEHGERVRYLHSDIDTVERMEIIRDLRLGEFDVLVGINLLREGLDMPEVSLVAILDADKEGFLRSERSLIQTIGRAARNVNGKAILYGDKITPSMAKAIGETERRREKQQKYNEEHGITPQGLNKKVVDILALGQNIAKTKAKGRGKSRPIVEPDNVPMDMSPKALQQKIHELEGLMMQHAQNLEFEEAAQIRDQLHQLRDLFIAAS.

The region spanning 26–183 (EGLEDGLAHQ…RRLAELQYAR (158 aa)) is the Helicase ATP-binding domain. 39-46 (GVTGSGKT) contributes to the ATP binding site. The short motif at 92–115 (YYDYYQPEAYVPSSDTFIEKDASV) is the Beta-hairpin element. Positions 431-597 (QVDDLLSEIR…GLNKKVVDIL (167 aa)) constitute a Helicase C-terminal domain. The disordered stretch occupies residues 608 to 627 (AKGRGKSRPIVEPDNVPMDM). Residues 633 to 668 (QQKIHELEGLMMQHAQNLEFEEAAQIRDQLHQLRDL) form the UVR domain.

It belongs to the UvrB family. Forms a heterotetramer with UvrA during the search for lesions. Interacts with UvrC in an incision complex.

It localises to the cytoplasm. Its function is as follows. The UvrABC repair system catalyzes the recognition and processing of DNA lesions. A damage recognition complex composed of 2 UvrA and 2 UvrB subunits scans DNA for abnormalities. Upon binding of the UvrA(2)B(2) complex to a putative damaged site, the DNA wraps around one UvrB monomer. DNA wrap is dependent on ATP binding by UvrB and probably causes local melting of the DNA helix, facilitating insertion of UvrB beta-hairpin between the DNA strands. Then UvrB probes one DNA strand for the presence of a lesion. If a lesion is found the UvrA subunits dissociate and the UvrB-DNA preincision complex is formed. This complex is subsequently bound by UvrC and the second UvrB is released. If no lesion is found, the DNA wraps around the other UvrB subunit that will check the other stand for damage. This is UvrABC system protein B from Escherichia coli O7:K1 (strain IAI39 / ExPEC).